Reading from the N-terminus, the 233-residue chain is Zinc import ATP-binding protein ZnuC (233 aa).

Positions 6-222 constitute an ABC transporter domain; that stretch reads IEFRNVSKKF…SEFSNALSSL (217 aa). 38–45 is an ATP binding site; that stretch reads GPNGAGKT.

Belongs to the ABC transporter superfamily. Zinc importer (TC 3.A.1.15.5) family. As to quaternary structure, the complex is composed of two ATP-binding proteins (ZnuC), two transmembrane proteins (ZnuB) and a solute-binding protein (ZnuA).

It is found in the cell inner membrane. The catalysed reaction is Zn(2+)(out) + ATP(in) + H2O(in) = Zn(2+)(in) + ADP(in) + phosphate(in) + H(+)(in). Its function is as follows. Part of the ABC transporter complex ZnuABC involved in zinc import. Responsible for energy coupling to the transport system. This chain is Zinc import ATP-binding protein ZnuC, found in Rickettsia prowazekii (strain Madrid E).